A 500-amino-acid chain; its full sequence is NAD(P)H-quinone oxidoreductase chain 4, chloroplastic (500 aa).

The next 14 helical transmembrane spans lie at 4–24 (FPWL…MLFL), 35–55 (YTIC…CYNF), 87–107 (IGTI…AFPV), 113–130 (FFHF…GSFS), 134–154 (LLLF…LLSM), 167–187 (FILY…GISL), 211–231 (ILFY…IPLH), 242–262 (HYST…YGLV), 272–292 (AHSM…IYAA), 305–325 (IAYS…SITD), 330–350 (GAIL…FLAG), 386–406 (LALP…GIIT), 416–436 (IFII…LLSM), and 462–482 (LFLS…PDFV).

This sequence belongs to the complex I subunit 4 family.

It localises to the plastid. The protein resides in the chloroplast thylakoid membrane. It carries out the reaction a plastoquinone + NADH + (n+1) H(+)(in) = a plastoquinol + NAD(+) + n H(+)(out). The enzyme catalyses a plastoquinone + NADPH + (n+1) H(+)(in) = a plastoquinol + NADP(+) + n H(+)(out). The protein is NAD(P)H-quinone oxidoreductase chain 4, chloroplastic (ndhD) of Arabidopsis thaliana (Mouse-ear cress).